The primary structure comprises 243 residues: Polycomb group RING finger protein 1 (243 aa).

K12 is covalently cross-linked (Glycyl lysine isopeptide (Lys-Gly) (interchain with G-Cter in SUMO2)). An RING-type zinc finger spans residues 35–74 (CCLCAGYFVDATTITECLHTFCKSCIVKYLQTSKYCPMCN). The necessary for repressor activity stretch occupies residues 74-231 (NIKIHETQPL…LSRWFGKPSP (158 aa)). A Glycyl lysine isopeptide (Lys-Gly) (interchain with G-Cter in SUMO2) cross-link involves residue K76. Residues 138–239 (LPFTSFDHYY…SPLLLQYSVK (102 aa)) form a required for the interaction with the KDM2B-SKP1 heterodimeric complex region. Residues 151–239 (EQLSLCLERL…SPLLLQYSVK (89 aa)) are RING-finger and WD40-associated ubiquitin-like domain (RAWUL); sufficient for interaction with BCOR and BCORL1.

As to quaternary structure, interacts with BCORL1, forming heterodimers. The PCGF1-BCORL1 heterodimeric complex interacts with the KDM2B-SKP1 heterodimeric complex to form a homotetrameric polycomb repression complex 1 (PRC1.1). Component of the repressive BCOR complex containing a Polycomb group subcomplex at least composed of RYBP, RING1 and RNF2/RING2. Specifically interacts with BCOR, RING1 and RNF2/RING2. Component of a PRC1-like complex. Interacts with CBX6, CBX7 and CBX8. Interacts with DPPA4, NANOG, POU5F1 and RYBP. As to expression, highly expressed in brain, cerebellum, heart and testis.

The protein localises to the nucleus. Functionally, component of the Polycomb group (PcG) multiprotein BCOR complex, a complex required to maintain the transcriptionally repressive state of some genes, such as BCL6 and the cyclin-dependent kinase inhibitor, CDKN1A. Transcriptional repressor that may be targeted to the DNA by BCL6; this transcription repressor activity may be related to PKC signaling pathway. Represses CDKN1A expression by binding to its promoter, and this repression is dependent on the retinoic acid response element (RARE element). Promotes cell cycle progression and enhances cell proliferation as well. May have a positive role in tumor cell growth by down-regulating CDKN1A. Component of a Polycomb group (PcG) multiprotein PRC1-like complex, a complex class required to maintain the transcriptionally repressive state of many genes, including Hox genes, throughout development. PcG PRC1 complex acts via chromatin remodeling and modification of histones; it mediates monoubiquitination of histone H2A 'Lys-119', rendering chromatin heritably changed in its expressibility. Within the PRC1-like complex, regulates RNF2 ubiquitin ligase activity. Regulates the expression of DPPA4 and NANOG in the NT2 embryonic carcinoma cells. This Rattus norvegicus (Rat) protein is Polycomb group RING finger protein 1 (Pcgf1).